Here is a 154-residue protein sequence, read N- to C-terminus: uncharacterized protein (154 aa).

The protein localises to the mitochondrion. This is an uncharacterized protein from Marchantia polymorpha (Common liverwort).